We begin with the raw amino-acid sequence, 534 residues long: Phosphoenolpyruvate carboxykinase (ATP) (534 aa).

Arginine 59, tyrosine 200, and lysine 206 together coordinate substrate. ATP contacts are provided by residues lysine 206, histidine 225, and 242 to 250 (GLSGTGKTT). Mn(2+)-binding residues include lysine 206 and histidine 225. Aspartate 263 is a Mn(2+) binding site. ATP-binding positions include glutamate 291, arginine 327, 443-444 (RI), and threonine 449. Residue arginine 327 coordinates substrate.

It belongs to the phosphoenolpyruvate carboxykinase (ATP) family. The cofactor is Mn(2+).

The protein localises to the cytoplasm. It catalyses the reaction oxaloacetate + ATP = phosphoenolpyruvate + ADP + CO2. It functions in the pathway carbohydrate biosynthesis; gluconeogenesis. In terms of biological role, involved in the gluconeogenesis. Catalyzes the conversion of oxaloacetate (OAA) to phosphoenolpyruvate (PEP) through direct phosphoryl transfer between the nucleoside triphosphate and OAA. The sequence is that of Phosphoenolpyruvate carboxykinase (ATP) from Lachnospira eligens (strain ATCC 27750 / DSM 3376 / VPI C15-48 / C15-B4) (Eubacterium eligens).